A 475-amino-acid polypeptide reads, in one-letter code: F-box/kelch-repeat protein At1g22040 (475 aa).

Residues M1–R28 are disordered. The region spanning C41–R87 is the F-box domain. Kelch repeat units lie at residues E94 to S140, G182 to K228, K229 to A279, P306 to E350, and Y352 to G401.

This chain is F-box/kelch-repeat protein At1g22040, found in Arabidopsis thaliana (Mouse-ear cress).